We begin with the raw amino-acid sequence, 247 residues long: UPF0259 membrane protein BU276 (247 aa).

Helical transmembrane passes span 20 to 40 (IGAI…IDMF), 85 to 105 (IMES…LISV), 114 to 134 (IVSS…LNFL), 137 to 157 (FIIQ…SIIL), 188 to 208 (IIGP…MLLA), and 218 to 238 (LFLI…IYLF).

It belongs to the UPF0259 family.

The protein localises to the cell membrane. The chain is UPF0259 membrane protein BU276 from Buchnera aphidicola subsp. Acyrthosiphon pisum (strain APS) (Acyrthosiphon pisum symbiotic bacterium).